The chain runs to 388 residues: Translation initiation factor eIF2B subunit beta (388 aa).

The disordered stretch occupies residues Asp109–Ile133. Positions Ser116–Ile133 are enriched in low complexity.

Belongs to the eIF-2B alpha/beta/delta subunits family. As to quaternary structure, component of the translation initiation factor 2B (eIF2B) complex which is a heterodecamer of two sets of five different subunits: alpha, beta, gamma, delta and epsilon. Subunits alpha, beta and delta comprise a regulatory subcomplex and subunits epsilon and gamma comprise a catalytic subcomplex. Within the complex, the hexameric regulatory complex resides at the center, with the two heterodimeric catalytic subcomplexes bound on opposite sides.

It is found in the cytoplasm. Its subcellular location is the cytosol. Acts as a component of the translation initiation factor 2B (eIF2B) complex, which catalyzes the exchange of GDP for GTP on eukaryotic initiation factor 2 (eIF2) gamma subunit. Its guanine nucleotide exchange factor activity is repressed when bound to eIF2 complex phosphorylated on the alpha subunit, thereby limiting the amount of methionyl-initiator methionine tRNA available to the ribosome and consequently global translation is repressed. This Dictyostelium discoideum (Social amoeba) protein is Translation initiation factor eIF2B subunit beta (eif2b2).